The primary structure comprises 445 residues: RNA-binding protein asd-2 (445 aa).

Positions 22-63 (TVIPPPPNDSGHEFIGPSSGPPQVTITPSGVQSGSANGVSTS) are disordered. Over residues 42-63 (PPQVTITPSGVQSGSANGVSTS) the composition is skewed to polar residues. Residues 71–128 (EYLSQLLKDKKQLAAFPNVFHHLERLADEEINKVRVVLFQCEFSKESAPLPDAEGDST) are qua1 domain. In terms of domain architecture, KH spans 145–171 (NFVGRILGPRGMTAKQLEQETGCKIMV). Residues 230 to 253 (APEGEDDLKRKQLMELAIINGTYR) form a qua2 domain; involved in RNA binding region.

As to quaternary structure, interacts with sup-12; in the presence of RNA, but with weak affinity in the absence of RNA. Isoform b: Expressed in the hypodermis and pharyngeal muscles. Isoform c: Expressed in body wall muscles and phayngeal muscles.

Its subcellular location is the nucleus. Functionally, RNA-binding protein that binds to the 5'-NACUAAY-N(1,20)-UAAY-3' consensus sequence in pre-mRNA introns to promote alternative splicing. Required for mutually exclusive alternative splicing where it modulates the switch between mutually exclusive exons during pre-mRNA maturation. Involved in muscle-specific gene expression regulating the alternative splicing of genes such as let-2 and unc-60 to ensure that their respective isoforms are expressed in muscle. Promotes the removal of intron 10 from let-2 pre-mRNA to allow for the exclusive expression of the muscle-specific let-2 isoform (as opposed to the non-muscle-specific isoform expressed in embryos) in body wall muscles during late larval and adult stages of development. Binds cooperatively with RNA-binding protein sup-12 to intron 1A of the unc-60 pre-mRNA to promote alternative splicing and expression of the muscle specific isoform of unc-60. This is RNA-binding protein asd-2 from Caenorhabditis elegans.